We begin with the raw amino-acid sequence, 264 residues long: Teichoic acids export ATP-binding protein TagH (264 aa).

The region spanning 5 to 243 (VNIKNVTKEY…YEAFLNDFKK (239 aa)) is the ABC transporter domain. ATP is bound at residue 57–64 (GINGSGKS).

It belongs to the ABC transporter superfamily. Teichoic acids exporter (TC 3.A.1.104.1) family. The complex is composed of two ATP-binding proteins (TagH) and two transmembrane proteins (TagG).

The protein resides in the cell membrane. The catalysed reaction is ATP + H2O + teichoic acidSide 1 = ADP + phosphate + teichoic acidSide 2.. Part of the ABC transporter complex TagGH involved in teichoic acids export. Responsible for energy coupling to the transport system. The sequence is that of Teichoic acids export ATP-binding protein TagH from Staphylococcus aureus (strain USA300).